Here is a 629-residue protein sequence, read N- to C-terminus: Probable alpha-L-arabinofuranosidase A (629 aa).

The first 25 residues, 1–25 (MVALSTLSGLSALPFLFSLVQNVYG), serve as a signal peptide directing secretion. 9 N-linked (GlcNAc...) asparagine glycosylation sites follow: Asn36, Asn51, Asn140, Asn152, Asn168, Asn171, Asn260, Asn494, and Asn534.

This sequence belongs to the glycosyl hydrolase 51 family.

It localises to the secreted. The catalysed reaction is Hydrolysis of terminal non-reducing alpha-L-arabinofuranoside residues in alpha-L-arabinosides.. It functions in the pathway glycan metabolism; L-arabinan degradation. Alpha-L-arabinofuranosidase involved in the degradation of arabinoxylan, a major component of plant hemicellulose. Acts only on small linear 1,5-alpha-linked L-arabinofuranosyl oligosaccharides. The sequence is that of Probable alpha-L-arabinofuranosidase A (abfA) from Aspergillus flavus (strain ATCC 200026 / FGSC A1120 / IAM 13836 / NRRL 3357 / JCM 12722 / SRRC 167).